A 930-amino-acid polypeptide reads, in one-letter code: Isoleucine--tRNA ligase (930 aa).

The short motif at 57 to 67 is the 'HIGH' region element; sequence PYANGNIHVGH. Glu554 serves as a coordination point for L-isoleucyl-5'-AMP. Residues 595-599 carry the 'KMSKS' region motif; it reads KMSKS. Residue Lys598 coordinates ATP. Residues Cys888, Cys891, Cys908, and Cys911 each contribute to the Zn(2+) site.

The protein belongs to the class-I aminoacyl-tRNA synthetase family. IleS type 1 subfamily. Monomer. Zn(2+) serves as cofactor.

It is found in the cytoplasm. The enzyme catalyses tRNA(Ile) + L-isoleucine + ATP = L-isoleucyl-tRNA(Ile) + AMP + diphosphate. In terms of biological role, catalyzes the attachment of isoleucine to tRNA(Ile). As IleRS can inadvertently accommodate and process structurally similar amino acids such as valine, to avoid such errors it has two additional distinct tRNA(Ile)-dependent editing activities. One activity is designated as 'pretransfer' editing and involves the hydrolysis of activated Val-AMP. The other activity is designated 'posttransfer' editing and involves deacylation of mischarged Val-tRNA(Ile). The sequence is that of Isoleucine--tRNA ligase from Streptococcus pneumoniae (strain ATCC 700669 / Spain 23F-1).